Consider the following 327-residue polypeptide: Biotin synthase (327 aa).

In terms of domain architecture, Radical SAM core spans 44–273 (FMGNKFDTCS…NAFLRFSGGR (230 aa)). The [4Fe-4S] cluster site is built by Cys62, Cys66, and Cys69. Residues Cys138, Cys198, and Arg268 each contribute to the [2Fe-2S] cluster site.

The protein belongs to the radical SAM superfamily. Biotin synthase family. Homodimer. The cofactor is [4Fe-4S] cluster. Requires [2Fe-2S] cluster as cofactor.

The catalysed reaction is (4R,5S)-dethiobiotin + (sulfur carrier)-SH + 2 reduced [2Fe-2S]-[ferredoxin] + 2 S-adenosyl-L-methionine = (sulfur carrier)-H + biotin + 2 5'-deoxyadenosine + 2 L-methionine + 2 oxidized [2Fe-2S]-[ferredoxin]. It participates in cofactor biosynthesis; biotin biosynthesis; biotin from 7,8-diaminononanoate: step 2/2. Functionally, catalyzes the conversion of dethiobiotin (DTB) to biotin by the insertion of a sulfur atom into dethiobiotin via a radical-based mechanism. This chain is Biotin synthase, found in Parabacteroides distasonis (strain ATCC 8503 / DSM 20701 / CIP 104284 / JCM 5825 / NCTC 11152).